The primary structure comprises 96 residues: Small ribosomal subunit protein uS19 (96 aa).

It belongs to the universal ribosomal protein uS19 family.

Its function is as follows. Protein S19 forms a complex with S13 that binds strongly to the 16S ribosomal RNA. This is Small ribosomal subunit protein uS19 from Koribacter versatilis (strain Ellin345).